The chain runs to 351 residues: Methionine import ATP-binding protein MetN (351 aa).

An ABC transporter domain is found at 2 to 238 (IKLNHINKTY…PKHPITRELI (237 aa)). Position 35–42 (35–42 (GYSGAGKS)) interacts with ATP.

This sequence belongs to the ABC transporter superfamily. Methionine importer (TC 3.A.1.24) family. The complex is composed of two ATP-binding proteins (MetN), two transmembrane proteins (MetI) and a solute-binding protein (MetQ).

Its subcellular location is the cell inner membrane. The catalysed reaction is L-methionine(out) + ATP + H2O = L-methionine(in) + ADP + phosphate + H(+). It carries out the reaction D-methionine(out) + ATP + H2O = D-methionine(in) + ADP + phosphate + H(+). Part of the ABC transporter complex MetNIQ involved in methionine import. Responsible for energy coupling to the transport system. The polypeptide is Methionine import ATP-binding protein MetN (Helicobacter hepaticus (strain ATCC 51449 / 3B1)).